Reading from the N-terminus, the 34-residue chain is Potassium channel toxin alpha-KTx 6.2 (34 aa).

Disulfide bonds link Cys3-Cys24, Cys9-Cys29, Cys13-Cys19, and Cys31-Cys34. Cys34 bears the Cysteine amide mark.

Belongs to the short scorpion toxin superfamily. Potassium channel inhibitor family. Alpha-KTx 06 subfamily. Expressed by the venom gland.

The protein resides in the secreted. Its function is as follows. Blocks voltage-gated potassium channels Kv1.2/KCNA2 (IC(50)=0.12-0.8 nM), KCa3.1/KCNN4 (IC(50)=1-2.2 nM), Shaker B (IC(50)=2.39-80 nM), Kv1.1/KCNA1 (IC(50)=37-45 or no activity, depending on the study), Kv1.3/KCNA3 (IC(50)=150-180 or no activity, depending on the study). The chain is Potassium channel toxin alpha-KTx 6.2 from Scorpio palmatus (Israeli golden scorpion).